Consider the following 180-residue polypeptide: NAD(P)H-quinone oxidoreductase subunit I, chloroplastic (180 aa).

2 4Fe-4S ferredoxin-type domains span residues 55–84 (GRIH…VDWR) and 95–124 (LNYS…MTEE). [4Fe-4S] cluster is bound by residues Cys-64, Cys-67, Cys-70, Cys-74, Cys-104, Cys-107, Cys-110, and Cys-114.

Belongs to the complex I 23 kDa subunit family. As to quaternary structure, NDH is composed of at least 16 different subunits, 5 of which are encoded in the nucleus. [4Fe-4S] cluster is required as a cofactor.

It localises to the plastid. Its subcellular location is the chloroplast thylakoid membrane. It carries out the reaction a plastoquinone + NADH + (n+1) H(+)(in) = a plastoquinol + NAD(+) + n H(+)(out). It catalyses the reaction a plastoquinone + NADPH + (n+1) H(+)(in) = a plastoquinol + NADP(+) + n H(+)(out). In terms of biological role, NDH shuttles electrons from NAD(P)H:plastoquinone, via FMN and iron-sulfur (Fe-S) centers, to quinones in the photosynthetic chain and possibly in a chloroplast respiratory chain. The immediate electron acceptor for the enzyme in this species is believed to be plastoquinone. Couples the redox reaction to proton translocation, and thus conserves the redox energy in a proton gradient. The polypeptide is NAD(P)H-quinone oxidoreductase subunit I, chloroplastic (Chloranthus spicatus (Chulantree)).